The sequence spans 362 residues: Peptide chain release factor 1 (362 aa).

Residue Gln-237 is modified to N5-methylglutamine.

Belongs to the prokaryotic/mitochondrial release factor family. In terms of processing, methylated by PrmC. Methylation increases the termination efficiency of RF1.

The protein resides in the cytoplasm. Its function is as follows. Peptide chain release factor 1 directs the termination of translation in response to the peptide chain termination codons UAG and UAA. In Aliivibrio salmonicida (strain LFI1238) (Vibrio salmonicida (strain LFI1238)), this protein is Peptide chain release factor 1.